We begin with the raw amino-acid sequence, 244 residues long: Type III pantothenate kinase (244 aa).

11 to 18 serves as a coordination point for ATP; it reads DAGNTSIK. Residues Tyr90 and 97–100 contribute to the substrate site; that span reads GIDR. The active-site Proton acceptor is the Asp99. Asp119 contributes to the K(+) binding site. Thr122 serves as a coordination point for ATP. A substrate-binding site is contributed by Thr175.

This sequence belongs to the type III pantothenate kinase family. As to quaternary structure, homodimer. NH4(+) is required as a cofactor. The cofactor is K(+).

It localises to the cytoplasm. The enzyme catalyses (R)-pantothenate + ATP = (R)-4'-phosphopantothenate + ADP + H(+). Its pathway is cofactor biosynthesis; coenzyme A biosynthesis; CoA from (R)-pantothenate: step 1/5. Its function is as follows. Catalyzes the phosphorylation of pantothenate (Pan), the first step in CoA biosynthesis. This Marinomonas sp. (strain MWYL1) protein is Type III pantothenate kinase.